The following is a 247-amino-acid chain: Probable chemoreceptor glutamine deamidase CheD (247 aa).

A disordered region spans residues 204-247 (KRPAAPQPARPRIELFGGRGTAPGAGSPSAGSPYAANLSRKQEA). Residues 227 to 239 (GAGSPSAGSPYAA) show a composition bias toward low complexity.

This sequence belongs to the CheD family.

The catalysed reaction is L-glutaminyl-[protein] + H2O = L-glutamyl-[protein] + NH4(+). Its function is as follows. Probably deamidates glutamine residues to glutamate on methyl-accepting chemotaxis receptors (MCPs), playing an important role in chemotaxis. In Burkholderia orbicola (strain AU 1054), this protein is Probable chemoreceptor glutamine deamidase CheD.